The primary structure comprises 228 residues: Ribonuclease S-4 (228 aa).

Positions 1-27 are cleaved as a signal peptide; it reads MGITGMTYMFTMVLSLIVLIFSASTVG. RNA is bound at residue glutamine 36. The cysteines at positions 42 and 49 are disulfide-linked. Residue histidine 60 participates in RNA binding. Residue histidine 60 is the Proton donor of the active site. A disulfide bridge connects residues cysteine 75 and cysteine 119. N-linked (GlcNAc) asparagine glycosylation is present at asparagine 87. 98-99 serves as a coordination point for RNA; sequence NV. N-linked (GlcNAc...) asparagine glycosylation occurs at asparagine 101. RNA-binding positions include phenylalanine 108, 111–112, and 115–116; these read RE and KH. The active site involves glutamate 112. Catalysis depends on histidine 116, which acts as the Proton acceptor. Asparagine 144, asparagine 160, and asparagine 175 each carry an N-linked (GlcNAc...) asparagine glycan. Intrachain disulfides connect cysteine 183–cysteine 222 and cysteine 199–cysteine 210.

It belongs to the RNase T2 family. In terms of processing, the N-glycans attached at Asn-101, Asn-160 and Asn-175 consist predominantly of disaccharide (GlcNAc-GlcNAc). The N-glycan at 87 is 53% monosaccharide and 47% disaccharide. The N-glycan at Asn-144 contains mannose and xylose.

The protein resides in the secreted. The protein localises to the extracellular space. It carries out the reaction a ribonucleotidyl-ribonucleotide-RNA + H2O = a 3'-end 3'-phospho-ribonucleotide-RNA + a 5'-end dephospho-ribonucleoside-RNA + H(+). Functionally, self-incompatibility (SI) is the inherited ability of a flowering plant to prevent self-fertilization by discriminating between self and non-self pollen during pollination. In many species, self-incompatibility is controlled by the single, multiallelic locus S. The protein is Ribonuclease S-4 of Pyrus pyrifolia (Chinese pear).